The chain runs to 696 residues: Tegument protein UL47 (696 aa).

Basic residues-rich tracts occupy residues methionine 1–threonine 15 and arginine 70–serine 81. 2 disordered regions span residues methionine 1–glycine 39 and serine 54–proline 130. Residues glutamate 57–alanine 84 form an RNA-binding region. The Nuclear localization signal motif lies at arginine 70 to alanine 84. A compositionally biased stretch (low complexity) spans alanine 87–serine 103. The Nuclear export signal signature appears at serine 650–glutamate 673.

The protein belongs to the alphaherpesvirinae HHV-1 UL47 family. Interacts with US3 kinase. Interacts with UL31 and UL34; these interactions seem important for efficient virion nuclear egress. Interacts with UL41/VHS. In terms of processing, phosphorylated by US3. This phosphorylation is required for proper nuclear localization.

The protein resides in the virion tegument. The protein localises to the host nucleus. Its subcellular location is the host cytoplasm. Tegument protein that can bind to various RNA transcripts. Plays a role in the attenuation of selective viral and cellular mRNA degradation by modulating the activity of host shutoff RNase UL41/VHS. Also plays a role in the primary envelopment of virions in the perinuclear space, probably by interacting with two nuclear egress proteins UL31 and UL34. In Human herpesvirus 2 (strain HG52) (HHV-2), this protein is Tegument protein UL47.